Reading from the N-terminus, the 662-residue chain is UvrABC system protein B (662 aa).

The Helicase ATP-binding domain maps to D31–R188. Residue G44 to T51 coordinates ATP. Positions Y97–V120 match the Beta-hairpin motif. The 167-residue stretch at Q435 to I601 folds into the Helicase C-terminal domain. Residues K626–L661 form the UVR domain.

The protein belongs to the UvrB family. As to quaternary structure, forms a heterotetramer with UvrA during the search for lesions. Interacts with UvrC in an incision complex.

Its subcellular location is the cytoplasm. In terms of biological role, the UvrABC repair system catalyzes the recognition and processing of DNA lesions. A damage recognition complex composed of 2 UvrA and 2 UvrB subunits scans DNA for abnormalities. Upon binding of the UvrA(2)B(2) complex to a putative damaged site, the DNA wraps around one UvrB monomer. DNA wrap is dependent on ATP binding by UvrB and probably causes local melting of the DNA helix, facilitating insertion of UvrB beta-hairpin between the DNA strands. Then UvrB probes one DNA strand for the presence of a lesion. If a lesion is found the UvrA subunits dissociate and the UvrB-DNA preincision complex is formed. This complex is subsequently bound by UvrC and the second UvrB is released. If no lesion is found, the DNA wraps around the other UvrB subunit that will check the other stand for damage. This is UvrABC system protein B from Streptococcus pneumoniae serotype 19F (strain G54).